The sequence spans 492 residues: MSNYFNTLNLRQQLAQLGKCRFMARTEFADGVNALRGKKVVIVGCGAQGLNQGLNMRDSGLDVAYALRAEAIAERRDSYRRATEHGFCVGDYQALIPQADLVINLTPDKQHAAVVSAVQPLMKPGAALGYSHGFNIVEVGQQIRPDITVVMVAPKCPGTEVREEYKRGFGVPTLIAVHPENDPRGAGMAIAKAWASATGGDRAGVLESSFVAEVKSDLMGEQTILCGMLQTGSLLCYERLVAEGADPAWAGKLIQFGWETITEALKQGGITLMMDRLSNPAKLRAYTLAGQLKTLMAPLFAKHMDDILSGAFSQGMMADWAADDAHLLTWRAETGESAFEKAPPFEGKIDEQTYFDRGVLLVAMVKAGVELAFETMVASGIVAESAYYESLHELPLIANTIARRRLYEMNVVISDTAEYGNYLFANAAVPLLRQGFMETLQPGDLGQPLPAEAVDNAALREVNQAIRQHPIETVGERLRGYMTDMKRVAVAG.

The KARI N-terminal Rossmann domain maps to 15–208 (AQLGKCRFMA…GGDRAGVLES (194 aa)). Residues 45-48 (CGAQ), Arg-68, Arg-76, Ser-78, and 108-110 (DKQ) contribute to the NADP(+) site. Residue His-132 is part of the active site. An NADP(+)-binding site is contributed by Gly-158. 2 consecutive KARI C-terminal knotted domains span residues 209-344 (SFVA…KAPP) and 345-485 (FEGK…MTDM). Residues Asp-217, Glu-221, Glu-389, and Glu-393 each coordinate Mg(2+). Ser-414 provides a ligand contact to substrate.

It belongs to the ketol-acid reductoisomerase family. Mg(2+) is required as a cofactor.

The enzyme catalyses (2R)-2,3-dihydroxy-3-methylbutanoate + NADP(+) = (2S)-2-acetolactate + NADPH + H(+). It catalyses the reaction (2R,3R)-2,3-dihydroxy-3-methylpentanoate + NADP(+) = (S)-2-ethyl-2-hydroxy-3-oxobutanoate + NADPH + H(+). It participates in amino-acid biosynthesis; L-isoleucine biosynthesis; L-isoleucine from 2-oxobutanoate: step 2/4. Its pathway is amino-acid biosynthesis; L-valine biosynthesis; L-valine from pyruvate: step 2/4. Functionally, involved in the biosynthesis of branched-chain amino acids (BCAA). Catalyzes an alkyl-migration followed by a ketol-acid reduction of (S)-2-acetolactate (S2AL) to yield (R)-2,3-dihydroxy-isovalerate. In the isomerase reaction, S2AL is rearranged via a Mg-dependent methyl migration to produce 3-hydroxy-3-methyl-2-ketobutyrate (HMKB). In the reductase reaction, this 2-ketoacid undergoes a metal-dependent reduction by NADPH to yield (R)-2,3-dihydroxy-isovalerate. This Edwardsiella ictaluri (strain 93-146) protein is Ketol-acid reductoisomerase (NADP(+)).